Consider the following 224-residue polypeptide: Phosphoribosyltransferase domain-containing protein 1 (224 aa).

The Mg(2+) site is built by E140 and D141. GMP is bound by residues 140–148 (EDIINTGRT), K172, 193–194 (FV), and D200. D200 serves as a coordination point for Mg(2+).

It belongs to the purine/pyrimidine phosphoribosyltransferase family.

The protein is Phosphoribosyltransferase domain-containing protein 1 (prtfdc1) of Xenopus laevis (African clawed frog).